Consider the following 124-residue polypeptide: Putative outer membrane protein CT_569 (124 aa).

An N-terminal signal peptide occupies residues 1–31; it reads MKKTKKRKQSITLVEMMVVITLIGIIGGALA.

Its subcellular location is the cell outer membrane. The sequence is that of Putative outer membrane protein CT_569 from Chlamydia trachomatis serovar D (strain ATCC VR-885 / DSM 19411 / UW-3/Cx).